The sequence spans 298 residues: Serine/threonine-protein kinase 1 (298 aa).

The Protein kinase domain maps to 38 to 276 (FIATRPMFEG…FKSLVSHPWF (239 aa)). Residues 45–53 (FEGGRNNVF) and lysine 65 contribute to the ATP site. The active-site Proton acceptor is aspartate 152.

The protein belongs to the protein kinase superfamily. Ser/Thr protein kinase family.

Its subcellular location is the virion. The protein resides in the host cytoplasm. The enzyme catalyses L-seryl-[protein] + ATP = O-phospho-L-seryl-[protein] + ADP + H(+). It catalyses the reaction L-threonyl-[protein] + ATP = O-phospho-L-threonyl-[protein] + ADP + H(+). Functionally, essential for viral replication. It may mediate the virus progression through DNA replication. The chain is Serine/threonine-protein kinase 1 from African swine fever virus (strain Badajoz 1971 Vero-adapted) (Ba71V).